Reading from the N-terminus, the 134-residue chain is Estradiol 17-beta-dehydrogenase 8 (134 aa).

Ser38 serves as a coordination point for substrate. Lys42 is modified (N6-succinyllysine). Catalysis depends on Tyr51, which acts as the Proton acceptor. NAD(+) contacts are provided by residues Tyr51–Lys55 and Ile84–Thr86. N6-succinyllysine is present on Lys55.

The protein belongs to the short-chain dehydrogenases/reductases (SDR) family. As to quaternary structure, heterotetramer with CBR4; contains two molecules of HSD17B8 and CBR4.

It localises to the mitochondrion matrix. It carries out the reaction 17beta-estradiol + NAD(+) = estrone + NADH + H(+). It catalyses the reaction 17beta-estradiol + NADP(+) = estrone + NADPH + H(+). The enzyme catalyses testosterone + NAD(+) = androst-4-ene-3,17-dione + NADH + H(+). It participates in steroid biosynthesis; estrogen biosynthesis. It functions in the pathway lipid metabolism; fatty acid biosynthesis. Its function is as follows. NAD-dependent 17-beta-hydroxysteroid dehydrogenase with highest activity towards estradiol. Has very low activity towards testosterone. The heterotetramer with CBR4 has NADH-dependent 3-ketoacyl-acyl carrier protein reductase activity, and thereby plays a role in mitochondrial fatty acid biosynthesis. Within the heterotetramer, HSD17B8 binds NADH; CBR4 binds NADPD. In Callithrix jacchus (White-tufted-ear marmoset), this protein is Estradiol 17-beta-dehydrogenase 8 (HSD17B8).